Reading from the N-terminus, the 461-residue chain is UDP-N-acetylmuramate--L-alanine ligase (461 aa).

112 to 118 (GTHGKTT) is an ATP binding site.

It belongs to the MurCDEF family.

The protein localises to the cytoplasm. The catalysed reaction is UDP-N-acetyl-alpha-D-muramate + L-alanine + ATP = UDP-N-acetyl-alpha-D-muramoyl-L-alanine + ADP + phosphate + H(+). It functions in the pathway cell wall biogenesis; peptidoglycan biosynthesis. Its function is as follows. Cell wall formation. This is UDP-N-acetylmuramate--L-alanine ligase from Geobacter sp. (strain M21).